The sequence spans 508 residues: Maturase K (508 aa).

The protein belongs to the intron maturase 2 family. MatK subfamily.

The protein localises to the plastid. It is found in the chloroplast. Functionally, usually encoded in the trnK tRNA gene intron. Probably assists in splicing its own and other chloroplast group II introns. The polypeptide is Maturase K (Ranunculus lingua (Greater spearwort)).